We begin with the raw amino-acid sequence, 393 residues long: NAD(P)H-quinone oxidoreductase subunit H, chloroplastic (393 aa).

This sequence belongs to the complex I 49 kDa subunit family. As to quaternary structure, NDH is composed of at least 16 different subunits, 5 of which are encoded in the nucleus.

It is found in the plastid. The protein localises to the chloroplast thylakoid membrane. It carries out the reaction a plastoquinone + NADH + (n+1) H(+)(in) = a plastoquinol + NAD(+) + n H(+)(out). It catalyses the reaction a plastoquinone + NADPH + (n+1) H(+)(in) = a plastoquinol + NADP(+) + n H(+)(out). In terms of biological role, NDH shuttles electrons from NAD(P)H:plastoquinone, via FMN and iron-sulfur (Fe-S) centers, to quinones in the photosynthetic chain and possibly in a chloroplast respiratory chain. The immediate electron acceptor for the enzyme in this species is believed to be plastoquinone. Couples the redox reaction to proton translocation, and thus conserves the redox energy in a proton gradient. This chain is NAD(P)H-quinone oxidoreductase subunit H, chloroplastic, found in Amborella trichopoda.